The chain runs to 1226 residues: Chromosome partition protein Smc (1226 aa).

32–39 (PNGCGKSN) lines the ATP pocket. 2 coiled-coil regions span residues 173–231 (ITKF…IKRN) and 269–491 (NSLE…SKSL). In terms of domain architecture, SMC hinge spans 527 to 635 (YQLLGNLIQC…FDGYFIASKF (109 aa)). Coiled-coil stretches lie at residues 679–741 (QGVV…AAKK), 775–965 (MLES…LREA), and 1006–1078 (HRRY…KSKE).

This sequence belongs to the SMC family. Homodimer.

It is found in the cytoplasm. Functionally, required for chromosome condensation and partitioning. The sequence is that of Chromosome partition protein Smc from Halobacteriovorax marinus (strain ATCC BAA-682 / DSM 15412 / SJ) (Bacteriovorax marinus).